Consider the following 371-residue polypeptide: NADH-ubiquinone oxidoreductase chain 1 (371 aa).

The next 10 helical transmembrane spans lie at 7 to 27 (IISI…VAYV), 44 to 64 (PNAV…KLLL), 77 to 97 (LFFL…AVIP), 109 to 129 (LGIL…LLAG), 153 to 173 (LVLS…NLGV), 180 to 200 (AVLF…GSIA), 226 to 246 (AVVF…MCIL), 263 to 283 (VFNI…NWMV), 302 to 322 (GWLY…IFIL), and 338 to 358 (FCWT…PCIL).

The protein belongs to the complex I subunit 1 family.

The protein resides in the mitochondrion inner membrane. It catalyses the reaction a ubiquinone + NADH + 5 H(+)(in) = a ubiquinol + NAD(+) + 4 H(+)(out). Core subunit of the mitochondrial membrane respiratory chain NADH dehydrogenase (Complex I) that is believed to belong to the minimal assembly required for catalysis. Complex I functions in the transfer of electrons from NADH to the respiratory chain. The immediate electron acceptor for the enzyme is believed to be ubiquinone. This Neurospora crassa (strain ATCC 24698 / 74-OR23-1A / CBS 708.71 / DSM 1257 / FGSC 987) protein is NADH-ubiquinone oxidoreductase chain 1 (ndh-1).